A 175-amino-acid chain; its full sequence is Large ribosomal subunit protein uL10 (175 aa).

It belongs to the universal ribosomal protein uL10 family. In terms of assembly, part of the ribosomal stalk of the 50S ribosomal subunit. The N-terminus interacts with L11 and the large rRNA to form the base of the stalk. The C-terminus forms an elongated spine to which L12 dimers bind in a sequential fashion forming a multimeric L10(L12)X complex.

In terms of biological role, forms part of the ribosomal stalk, playing a central role in the interaction of the ribosome with GTP-bound translation factors. In Prochlorococcus marinus (strain SARG / CCMP1375 / SS120), this protein is Large ribosomal subunit protein uL10.